The chain runs to 254 residues: O-antigen biosynthesis glycosyltransferase WbnJ (254 aa).

This sequence belongs to the glycosyltransferase 2 family.

It catalyses the reaction an N-acetyl-alpha-D-galactosaminyl derivative + UDP-alpha-D-galactose = a beta-D-galactosyl-(1-&gt;3)-N-acetyl-alpha-D-galactosaminyl derivative + UDP + H(+). The enzyme catalyses alpha-D-GalNAc-(1-&gt;3)-alpha-D-GalNAc-di-trans,octa-cis-undecaprenyl diphosphate + UDP-alpha-D-galactose = beta-D-Gal-(1-&gt;3)-alpha-D-GalNAc-(1-&gt;3)-alpha-D-GalNAc-di-trans,octa-cis-undecaprenyl diphosphate + UDP + H(+). It functions in the pathway bacterial outer membrane biogenesis; LPS O-antigen biosynthesis. Involved in the assembly of the O-repeating unit during O-antigen biosynthesis. The sequence is that of O-antigen biosynthesis glycosyltransferase WbnJ from Escherichia coli.